Here is a 358-residue protein sequence, read N- to C-terminus: MIDALFPLARPLLHGLDAETAHDLTIRGLSLLPPRRPPADDASLAVEMFGQSFPNPVGLAAGFDKGARVADALLGLGFGFVEVGGVVPQPQPGNPRPRVFRLPRDRAVINRFGLNSEGLDAVADRLKARAGREGIVGVNIGANKESADRLADYVACTARLAPHVAFITVNVSSPNTPGLRDLQGEAFLDDLLARVVAARDASGSSAAVLLKIAPDIALEGLDAMTATALRRGIQGLVVSNTTIARPSSLVESSVAKETGGLSGRPLFGLSTRLLAETYLRVGDRIPLIGVGGIDSAEAAWAKIRAGARLVQLYSALVYEGPGLVGTIKRGLSQRLRAEGLTSLAPVVGRDAAALARDA.

FMN-binding positions include 61 to 65 and G85; that span reads AGFDK. Substrate is bound at residue K65. Position 110-114 (110-114) interacts with substrate; sequence NRFGL. 2 residues coordinate FMN: N139 and N170. A substrate-binding site is contributed by N170. S173 serves as the catalytic Nucleophile. N175 provides a ligand contact to substrate. FMN contacts are provided by K211 and S239. 240–241 is a substrate binding site; that stretch reads NT. FMN-binding positions include G263, G292, and 313-314; that span reads YS.

Belongs to the dihydroorotate dehydrogenase family. Type 2 subfamily. In terms of assembly, monomer. FMN is required as a cofactor.

The protein resides in the cell membrane. It catalyses the reaction (S)-dihydroorotate + a quinone = orotate + a quinol. It functions in the pathway pyrimidine metabolism; UMP biosynthesis via de novo pathway; orotate from (S)-dihydroorotate (quinone route): step 1/1. In terms of biological role, catalyzes the conversion of dihydroorotate to orotate with quinone as electron acceptor. The polypeptide is Dihydroorotate dehydrogenase (quinone) (Methylorubrum extorquens (strain CM4 / NCIMB 13688) (Methylobacterium extorquens)).